We begin with the raw amino-acid sequence, 815 residues long: Leucine--tRNA ligase (815 aa).

The short motif at 42–52 (PYPSGRLHMGH) is the 'HIGH' region element. The 'KMSKS' region motif lies at 571–575 (KMSKS). K574 provides a ligand contact to ATP.

This sequence belongs to the class-I aminoacyl-tRNA synthetase family.

Its subcellular location is the cytoplasm. The catalysed reaction is tRNA(Leu) + L-leucine + ATP = L-leucyl-tRNA(Leu) + AMP + diphosphate. The protein is Leucine--tRNA ligase of Vesicomyosocius okutanii subsp. Calyptogena okutanii (strain HA).